A 770-amino-acid chain; its full sequence is Transferrin receptor protein 1 (770 aa).

Topologically, residues 1–70 (MMDQARSAFS…KPKRCNGFIC (70 aa)) are cytoplasmic. The interval 1 to 70 (MMDQARSAFS…KPKRCNGFIC (70 aa)) is mediates interaction with SH3BP4. Phosphoserine occurs at positions 10 and 19. Tyrosine 20 carries the phosphotyrosine modification. Residues 20–23 (YTRF) carry the Endocytosis signal motif. Threonine 21 is modified (phosphothreonine). Serine 24 is modified (phosphoserine). Positions 61-64 (KPKR) match the Stop-transfer sequence motif. Residues cysteine 65 and cysteine 70 are each lipidated (S-palmitoyl cysteine). Residues 71–90 (YGTIAVVLFFLIGFMIGYLG) form a helical; Signal-anchor for type II membrane protein membrane-spanning segment. The Extracellular portion of the chain corresponds to 91-770 (YCKRVEPKAG…GDIWDIDNEF (680 aa)). The interval 102-122 (ERPTGTEALGTERTEPSETEE) is disordered. Threonine 107 is a glycosylation site (O-linked (GalNAc...) threonine). The PA domain maps to 233 to 323 (SKATTVTGRL…GTGDPYTPGF (91 aa)). 3 N-linked (GlcNAc...) asparagine glycosylation sites follow: asparagine 261, asparagine 327, and asparagine 384. The ligand-binding stretch occupies residues 579–770 (TMDLYENLNQ…GDIWDIDNEF (192 aa)). The Cell attachment site signature appears at 656–658 (RGD). 2 N-linked (GlcNAc...) asparagine glycosylation sites follow: asparagine 732 and asparagine 737.

The protein belongs to the peptidase M28 family. M28B subfamily. As to quaternary structure, homodimer; disulfide-linked. Binds one transferrin molecule per subunit. Interacts with SH3BP4. Interacts with STEAP3; facilitates TFRC endocytosis in erythroid precursor cells. In terms of processing, stearoylated by ZDHHC6 which inhibits TFRC-mediated activation of the JNK pathway and promotes mitochondrial fragmentation. Stearoylation does not affect iron uptake. Post-translationally, N- and O-glycosylated, phosphorylated and palmitoylated.

It localises to the cell membrane. Its subcellular location is the melanosome. Its function is as follows. Cellular uptake of iron occurs via receptor-mediated endocytosis of ligand-occupied transferrin receptor into specialized endosomes. Endosomal acidification leads to iron release. The apotransferrin-receptor complex is then recycled to the cell surface with a return to neutral pH and the concomitant loss of affinity of apotransferrin for its receptor. Transferrin receptor is necessary for development of erythrocytes and the nervous system. Positively regulates T and B cell proliferation through iron uptake. Acts as a lipid sensor that regulates mitochondrial fusion by regulating activation of the JNK pathway. When dietary levels of stearate (C18:0) are low, promotes activation of the JNK pathway, resulting in HUWE1-mediated ubiquitination and subsequent degradation of the mitofusin MFN2 and inhibition of mitochondrial fusion. When dietary levels of stearate (C18:0) are high, TFRC stearoylation inhibits activation of the JNK pathway and thus degradation of the mitofusin MFN2. Mediates uptake of NICOL1 into fibroblasts where it may regulate extracellular matrix production. This Canis lupus familiaris (Dog) protein is Transferrin receptor protein 1 (TFRC).